Here is a 1088-residue protein sequence, read N- to C-terminus: RNA-directed RNA polymerase (1088 aa).

The RdRp catalytic domain occupies 501 to 687 (LSYGDVTRFL…AKRYIAGGKI (187 aa)).

It belongs to the reoviridae RNA-directed RNA polymerase family. In terms of assembly, interacts with VP3 (Potential). Interacts with VP2; this interaction activates VP1. Interacts with NSP5; this interaction is probably necessary for the formation of functional virus factories. Interacts with NSP2; this interaction is weak. Mg(2+) serves as cofactor.

The protein resides in the virion. The catalysed reaction is RNA(n) + a ribonucleoside 5'-triphosphate = RNA(n+1) + diphosphate. Its function is as follows. RNA-directed RNA polymerase that is involved in both transcription and genome replication. Together with VP3 capping enzyme, forms an enzyme complex positioned near the channels situated at each of the five-fold vertices of the core. Following infection, the outermost layer of the virus is lost, leaving a double-layered particle (DLP) made up of the core and VP6 shell. VP1 then catalyzes the transcription of fully conservative plus-strand genomic RNAs that are extruded through the DLP's channels into the cytoplasm where they function as mRNAs for translation of viral proteins. One copy of each of the viral (+)RNAs is also recruited during core assembly, together with newly synthesized polymerase complexes and VP2. The polymerase of these novo-formed particles catalyzes the synthesis of complementary minus-strands leading to dsRNA formation. To do so, the polymerase specifically recognizes and binds 4 bases 5'-UGUG-3' in the conserved 3'-sequence of plus-strand RNA templates. VP2 presumably activates the autoinhibited VP1-RNA complex to coordinate packaging and genome replication. Once dsRNA synthesis is complete, the polymerase switches to the transcriptional mode, thus providing secondary transcription. This is RNA-directed RNA polymerase from Bos taurus (Bovine).